Consider the following 341-residue polypeptide: Glyceraldehyde-3-phosphate dehydrogenase (341 aa).

NAD(+)-binding positions include Thr-11–Ile-12 and Gly-109. Position 138-140 (Ser-138–Asn-140) interacts with D-glyceraldehyde 3-phosphate. The Nucleophile role is filled by Cys-139. NAD(+) is bound at residue Arg-167. D-glyceraldehyde 3-phosphate is bound by residues Thr-169 and His-192–Ala-193. Gln-299 lines the NAD(+) pocket.

The protein belongs to the glyceraldehyde-3-phosphate dehydrogenase family. As to quaternary structure, homotetramer.

Its subcellular location is the cytoplasm. It carries out the reaction D-glyceraldehyde 3-phosphate + phosphate + NADP(+) = (2R)-3-phospho-glyceroyl phosphate + NADPH + H(+). The enzyme catalyses D-glyceraldehyde 3-phosphate + phosphate + NAD(+) = (2R)-3-phospho-glyceroyl phosphate + NADH + H(+). The protein operates within carbohydrate degradation; glycolysis; pyruvate from D-glyceraldehyde 3-phosphate: step 1/5. In Picrophilus torridus (strain ATCC 700027 / DSM 9790 / JCM 10055 / NBRC 100828 / KAW 2/3), this protein is Glyceraldehyde-3-phosphate dehydrogenase.